Here is a 151-residue protein sequence, read N- to C-terminus: Large ribosomal subunit protein uL16 (151 aa).

It belongs to the universal ribosomal protein uL16 family. Part of the 50S ribosomal subunit.

Its function is as follows. Binds 23S rRNA and is also seen to make contacts with the A and possibly P site tRNAs. The sequence is that of Large ribosomal subunit protein uL16 from Chloroflexus aurantiacus (strain ATCC 29364 / DSM 637 / Y-400-fl).